The primary structure comprises 127 residues: NADPH-dependent 7-cyano-7-deazaguanine reductase (127 aa).

Catalysis depends on Cys-40, which acts as the Thioimide intermediate. Asp-47 functions as the Proton donor in the catalytic mechanism. Residues 62–64 and 81–82 each bind substrate; these read VEL and HE.

Belongs to the GTP cyclohydrolase I family. QueF type 1 subfamily.

It localises to the cytoplasm. It catalyses the reaction 7-aminomethyl-7-carbaguanine + 2 NADP(+) = 7-cyano-7-deazaguanine + 2 NADPH + 3 H(+). Its pathway is tRNA modification; tRNA-queuosine biosynthesis. Functionally, catalyzes the NADPH-dependent reduction of 7-cyano-7-deazaguanine (preQ0) to 7-aminomethyl-7-deazaguanine (preQ1). This Campylobacter jejuni (strain RM1221) protein is NADPH-dependent 7-cyano-7-deazaguanine reductase.